A 418-amino-acid chain; its full sequence is Gamma-glutamyl phosphate reductase (418 aa).

The protein belongs to the gamma-glutamyl phosphate reductase family.

It is found in the cytoplasm. The enzyme catalyses L-glutamate 5-semialdehyde + phosphate + NADP(+) = L-glutamyl 5-phosphate + NADPH + H(+). It participates in amino-acid biosynthesis; L-proline biosynthesis; L-glutamate 5-semialdehyde from L-glutamate: step 2/2. Functionally, catalyzes the NADPH-dependent reduction of L-glutamate 5-phosphate into L-glutamate 5-semialdehyde and phosphate. The product spontaneously undergoes cyclization to form 1-pyrroline-5-carboxylate. This Trichlorobacter lovleyi (strain ATCC BAA-1151 / DSM 17278 / SZ) (Geobacter lovleyi) protein is Gamma-glutamyl phosphate reductase.